Here is a 176-residue protein sequence, read N- to C-terminus: MSRIGLKTIEVPDSVTVTKDGDNITVKGPKGELTRYFDPKITFEQKDGEINFSRSSESDKALHGTERANLASMIEGVVNGYKKTLKLIGVGYRAQAQGNKVTLNVGYSHPVVLTAPEGVTVKATSATDVEVEGVSKQDVGQFAAEIRAVRPPEPYKGKGIRYVDEYVRRKEGKTGK.

It belongs to the universal ribosomal protein uL6 family. In terms of assembly, part of the 50S ribosomal subunit.

Functionally, this protein binds to the 23S rRNA, and is important in its secondary structure. It is located near the subunit interface in the base of the L7/L12 stalk, and near the tRNA binding site of the peptidyltransferase center. The chain is Large ribosomal subunit protein uL6 from Lactobacillus helveticus (strain DPC 4571).